The primary structure comprises 315 residues: ADP/ATP translocase (315 aa).

Topologically, residues 1-13 are mitochondrial intermembrane; the sequence is MSNKQETKILGMP. Solcar repeat units lie at residues 13–106 and 118–210; these read PPFV…FKAM and KWMA…IKPV. The chain crosses the membrane as a helical span at residues 14-37; the sequence is PFVVDFLMGGVSAAVSKTAAAPIE. Lys-30 is a bongkrekate binding site. At 38–80 the chain is on the mitochondrial matrix side; that stretch reads RIKLLVQNQDEMIKAGRLDRRYNGIIDCFRRTTADEGLMALWR. A cardiolipin is bound by residues Ile-62 and 81–83; that span reads GNT. Residues 81–104 traverse the membrane as a helical segment; that stretch reads GNTANVIRYFPTQALNFAFRDKFK. Arg-88 serves as a coordination point for ADP. Residues 88-89 and Asn-96 contribute to the bongkrekate site; that span reads RY. The Mitochondrial intermembrane segment spans residues 105-115; that stretch reads AMFGYKKDKDG. Residues 116-145 form a helical membrane-spanning segment; it reads YAKWMAGNLASGGAAGATSLLFVYSLDYAR. Residues 146-184 lie on the Mitochondrial matrix side of the membrane; it reads TRLANDAKSAKGGGARQFNGLIDVYRKTLASDGIAGLYR. Residues Leu-166 and 184–185 each bind a cardiolipin; that span reads RG. A helical transmembrane segment spans residues 185 to 213; that stretch reads GFGPSVAGIVVYRGLYFGMYDSIKPVVLV. 196–197 lines the bongkrekate pocket; that stretch reads YR. Topologically, residues 214-216 are mitochondrial intermembrane; it reads GPL. A helical transmembrane segment spans residues 217-242; the sequence is ANNFLASFLLGWCVTTGAGIASYPLD. Residues 218–304 form a Solcar repeat; that stretch reads NNFLASFLLG…LSIYDQLQIL (87 aa). Residues 243–283 are Mitochondrial matrix-facing; it reads TVRRRMMMTSGEAVKYKSSIDAFRQIIAKEGVKSLFKGAGA. An ADP-binding site is contributed by Arg-245. A Nucleotide carrier signature motif motif is present at residues 245–250; that stretch reads RRRMMM. Residues 260-261 and 280-282 each bind a cardiolipin; these read SS and GAG. A helical membrane pass occupies residues 284-304; the sequence is NILRGVAGAGVLSIYDQLQIL. Topologically, residues 305–315 are mitochondrial intermembrane; it reads LFGKAFKGGSG.

The protein belongs to the mitochondrial carrier (TC 2.A.29) family. As to quaternary structure, monomer.

Its subcellular location is the mitochondrion inner membrane. It catalyses the reaction ADP(in) + ATP(out) = ADP(out) + ATP(in). The matrix-open state (m-state) is inhibited by the membrane-permeable bongkrekic acid (BKA). The cytoplasmic-open state (c-state) is inhibited by the membrane-impermeable toxic inhibitor carboxyatractyloside (CATR). Functionally, ADP:ATP antiporter that mediates import of ADP into the mitochondrial matrix for ATP synthesis, and export of ATP out to fuel the cell. Cycles between the cytoplasmic-open state (c-state) and the matrix-open state (m-state): operates by the alternating access mechanism with a single substrate-binding site intermittently exposed to either the cytosolic (c-state) or matrix (m-state) side of the inner mitochondrial membrane. This Thermothelomyces thermophilus (strain ATCC 42464 / BCRC 31852 / DSM 1799) (Sporotrichum thermophile) protein is ADP/ATP translocase.